Here is a 123-residue protein sequence, read N- to C-terminus: Alpha-lactalbumin (123 aa).

The C-type lysozyme domain maps to 1 to 123 (KQFTKCELSQ…KLEQWLCEEL (123 aa)). Disulfide bonds link Cys6–Cys120, Cys28–Cys111, Cys61–Cys77, and Cys73–Cys91. Ca(2+) is bound by residues Lys79, Asp82, Asp84, Asp87, and Asp88.

This sequence belongs to the glycosyl hydrolase 22 family. Lactose synthase (LS) is a heterodimer of a catalytic component, beta1,4-galactosyltransferase (beta4Gal-T1) and a regulatory component, alpha-lactalbumin (LA). Mammary gland specific. Secreted in milk.

It is found in the secreted. Regulatory subunit of lactose synthase, changes the substrate specificity of galactosyltransferase in the mammary gland making glucose a good acceptor substrate for this enzyme. This enables LS to synthesize lactose, the major carbohydrate component of milk. In other tissues, galactosyltransferase transfers galactose onto the N-acetylglucosamine of the oligosaccharide chains in glycoproteins. The polypeptide is Alpha-lactalbumin (LALBA) (Equus asinus (Donkey)).